We begin with the raw amino-acid sequence, 308 residues long: Ribonuclease Z (308 aa).

Zn(2+) contacts are provided by His-63, His-65, Asp-67, His-68, His-141, Asp-212, and His-270. The active-site Proton acceptor is Asp-67.

This sequence belongs to the RNase Z family. In terms of assembly, homodimer. Requires Zn(2+) as cofactor.

It catalyses the reaction Endonucleolytic cleavage of RNA, removing extra 3' nucleotides from tRNA precursor, generating 3' termini of tRNAs. A 3'-hydroxy group is left at the tRNA terminus and a 5'-phosphoryl group is left at the trailer molecule.. Zinc phosphodiesterase, which displays some tRNA 3'-processing endonuclease activity. Probably involved in tRNA maturation, by removing a 3'-trailer from precursor tRNA. The chain is Ribonuclease Z from Pediococcus pentosaceus (strain ATCC 25745 / CCUG 21536 / LMG 10740 / 183-1w).